The primary structure comprises 216 residues: Large ribosomal subunit protein uL24m (216 aa).

The N-terminal 9 residues, 1 to 9, are a transit peptide targeting the mitochondrion; it reads MRLTLLLEM. The region spanning 56-89 is the KOW domain; sequence YFRGDTVEVLHGKDAGKQGKVTQVVRARNWVVVD.

It belongs to the universal ribosomal protein uL24 family. As to quaternary structure, component of the mitochondrial ribosome large subunit (39S) which comprises a 16S rRNA and about 50 distinct proteins. Ubiquitous. Expressed at greater levels in the kidney, adipose tissue, muscle and liver than the brain, heart, ovary and lung.

Its subcellular location is the mitochondrion. The polypeptide is Large ribosomal subunit protein uL24m (mrpl24) (Xenopus laevis (African clawed frog)).